Here is a 383-residue protein sequence, read N- to C-terminus: BRISC and BRCA1-A complex member 2 (383 aa).

Methionine 1 carries the post-translational modification N-acetylmethionine. A Phosphoserine modification is found at serine 2. UEV-like regions lie at residues 30–147 (DATN…TLLE) and 275–364 (IAAF…RAKA).

It belongs to the BABAM2 family. As to quaternary structure, component of the ARISC complex, at least composed of UIMC1/RAP80, ABRAXAS1, BRCC3/BRCC36, BABAM2 and BABAM1/NBA1. Component of the BRCA1-A complex, at least composed of BRCA1, BARD1, UIMC1/RAP80, ABRAXAS1, BRCC3/BRCC36, BABAM2 and BABAM1/NBA1. In the BRCA1-A complex, interacts directly with ABRAXAS1, BRCC3/BRCC36 and BABAM1/NBA1. Binds polyubiquitin. Component of the BRISC complex, at least composed of ABRAXAS2, BRCC3/BRCC36, BABAM2 and BABAM1/NBA1. Identified in a complex with SHMT2 and the other subunits of the BRISC complex. Component of the BRCA1/BRCA2 containing complex (BRCC), which also contains BRCA1, BRCA2, BARD1, BRCC3/BRCC36 and RAD51. BRCC is a ubiquitin E3 ligase complex that enhances cellular survival following DNA damage. May interact with FAS and TNFRSF1A.

The protein localises to the cytoplasm. The protein resides in the nucleus. Component of the BRCA1-A complex, a complex that specifically recognizes 'Lys-63'-linked ubiquitinated histones H2A and H2AX at DNA lesions sites, leading to target the BRCA1-BARD1 heterodimer to sites of DNA damage at double-strand breaks (DSBs). The BRCA1-A complex also possesses deubiquitinase activity that specifically removes 'Lys-63'-linked ubiquitin on histones H2A and H2AX. In the BRCA1-A complex, it acts as an adapter that bridges the interaction between BABAM1/NBA1 and the rest of the complex, thereby being required for the complex integrity and modulating the E3 ubiquitin ligase activity of the BRCA1-BARD1 heterodimer. Component of the BRISC complex, a multiprotein complex that specifically cleaves 'Lys-63'-linked ubiquitin in various substrates. Within the BRISC complex, acts as an adapter that bridges the interaction between BABAM1/NBA1 and the rest of the complex, thereby being required for the complex integrity. The BRISC complex is required for normal mitotic spindle assembly and microtubule attachment to kinetochores via its role in deubiquitinating NUMA1. The BRISC complex plays a role in interferon signaling via its role in the deubiquitination of the interferon receptor IFNAR1; deubiquitination increases IFNAR1 activity by enhancing its stability and cell surface expression. Down-regulates the response to bacterial lipopolysaccharide (LPS) via its role in IFNAR1 deubiquitination. May play a role in homeostasis or cellular differentiation in cells of neural, epithelial and germline origins. May also act as a death receptor-associated anti-apoptotic protein, which inhibits the mitochondrial apoptotic pathway. May regulate TNF-alpha signaling through its interactions with TNFRSF1A; however these effects may be indirect. The protein is BRISC and BRCA1-A complex member 2 (BABAM2) of Bos taurus (Bovine).